Here is a 1168-residue protein sequence, read N- to C-terminus: Transcription-repair-coupling factor (1168 aa).

In terms of domain architecture, Helicase ATP-binding spans Asp633 to Ile794. Gly646 to Thr653 contributes to the ATP binding site. Positions Asp747 to Gln750 match the DEEQ box motif. Positions Val808–Asn969 constitute a Helicase C-terminal domain.

This sequence in the N-terminal section; belongs to the UvrB family. The protein in the C-terminal section; belongs to the helicase family. RecG subfamily.

The protein resides in the cytoplasm. In terms of biological role, couples transcription and DNA repair by recognizing RNA polymerase (RNAP) stalled at DNA lesions. Mediates ATP-dependent release of RNAP and its truncated transcript from the DNA, and recruitment of nucleotide excision repair machinery to the damaged site. The protein is Transcription-repair-coupling factor of Staphylococcus aureus (strain bovine RF122 / ET3-1).